We begin with the raw amino-acid sequence, 427 residues long: Proline--tRNA ligase (427 aa).

It belongs to the class-II aminoacyl-tRNA synthetase family. ProS type 2 subfamily. In terms of assembly, homodimer.

It is found in the cytoplasm. It carries out the reaction tRNA(Pro) + L-proline + ATP = L-prolyl-tRNA(Pro) + AMP + diphosphate. Its function is as follows. Catalyzes the attachment of proline to tRNA(Pro) in a two-step reaction: proline is first activated by ATP to form Pro-AMP and then transferred to the acceptor end of tRNA(Pro). The protein is Proline--tRNA ligase of Rickettsia akari (strain Hartford).